Here is a 243-residue protein sequence, read N- to C-terminus: MKNIRVTVEYDGTSFAGWQRQSGAIVTVQGEIEVALGKILQEKISLAAAGRTDKGVHARAQTANFFTASSLEPSRIVHSLNSLLPQTIRISNPEEVDADFHARHSAKERQYRYFLIEEPSAIYGRFAGCSFGKLDVAIMQQMAAILVGTHDFSAFSKEDRDNPGRICSVTACKWYPCKHYLVLRISADRFLRSMVRYLVDAMIRAGKGRLSVGDFCRMLETGVTTSQLNPALPAGLFLWDVLY.

Asp53 functions as the Nucleophile in the catalytic mechanism. Tyr111 is a binding site for substrate.

This sequence belongs to the tRNA pseudouridine synthase TruA family. As to quaternary structure, homodimer.

It carries out the reaction uridine(38/39/40) in tRNA = pseudouridine(38/39/40) in tRNA. Functionally, formation of pseudouridine at positions 38, 39 and 40 in the anticodon stem and loop of transfer RNAs. The polypeptide is tRNA pseudouridine synthase A (Pelodictyon phaeoclathratiforme (strain DSM 5477 / BU-1)).